We begin with the raw amino-acid sequence, 115 residues long: Large ribosomal subunit protein bL19 (115 aa).

This sequence belongs to the bacterial ribosomal protein bL19 family.

Its function is as follows. This protein is located at the 30S-50S ribosomal subunit interface and may play a role in the structure and function of the aminoacyl-tRNA binding site. This chain is Large ribosomal subunit protein bL19, found in Clostridium tetani (strain Massachusetts / E88).